Reading from the N-terminus, the 162-residue chain is Disulfide bond formation protein B (162 aa).

Over 1-8 (MTPLFRKA) the chain is Cytoplasmic. Residues 9-25 (VWLLFAVSVCAFAGSLA) form a helical membrane-spanning segment. Over 26 to 43 (AQYVLGMEPCVLCISQRL) the chain is Periplasmic. A disulfide bridge connects residues Cys35 and Cys38. The chain crosses the membrane as a helical span at residues 44–60 (CVLATALCTAIVLMCRP). The Cytoplasmic segment spans residues 61 to 67 (RRRAGGL). A helical transmembrane segment spans residues 68 to 85 (FGAVFISIPAVTGISVAA). The Periplasmic segment spans residues 86–141 (YQLWLQSLPPGTAPSCGAPWTFRLKGWSLFDWFEPVVRGFGNCAEPDYLLGVALPV). Cys101 and Cys128 form a disulfide bridge. A helical transmembrane segment spans residues 142–160 (WSAAYFLAVVLTVWWAWAR). Topologically, residues 161 to 162 (AK) are cytoplasmic.

This sequence belongs to the DsbB family.

Its subcellular location is the cell inner membrane. Required for disulfide bond formation in some periplasmic proteins. Acts by oxidizing the DsbA protein. In Neisseria meningitidis serogroup C / serotype 2a (strain ATCC 700532 / DSM 15464 / FAM18), this protein is Disulfide bond formation protein B.